A 100-amino-acid polypeptide reads, in one-letter code: Urease subunit gamma (100 aa).

The protein belongs to the urease gamma subunit family. As to quaternary structure, heterotrimer of UreA (gamma), UreB (beta) and UreC (alpha) subunits. Three heterotrimers associate to form the active enzyme.

Its subcellular location is the cytoplasm. It catalyses the reaction urea + 2 H2O + H(+) = hydrogencarbonate + 2 NH4(+). It functions in the pathway nitrogen metabolism; urea degradation; CO(2) and NH(3) from urea (urease route): step 1/1. This is Urease subunit gamma from Rhodopseudomonas palustris (strain ATCC BAA-98 / CGA009).